A 234-amino-acid polypeptide reads, in one-letter code: Orotidine 5'-phosphate decarboxylase (234 aa).

Residues D17, K38, 65 to 74 (DLKLHDIPNT), T122, R184, Q193, G213, and R214 each bind substrate. Catalysis depends on K67, which acts as the Proton donor.

The protein belongs to the OMP decarboxylase family. Type 1 subfamily. In terms of assembly, homodimer.

The enzyme catalyses orotidine 5'-phosphate + H(+) = UMP + CO2. It participates in pyrimidine metabolism; UMP biosynthesis via de novo pathway; UMP from orotate: step 2/2. In terms of biological role, catalyzes the decarboxylation of orotidine 5'-monophosphate (OMP) to uridine 5'-monophosphate (UMP). This chain is Orotidine 5'-phosphate decarboxylase, found in Thermosynechococcus vestitus (strain NIES-2133 / IAM M-273 / BP-1).